Here is a 160-residue protein sequence, read N- to C-terminus: Anaerobic nitrite reductase Glb1-1 (160 aa).

Residues 8-157 (GFTEEQEALV…LVNAIKSEMK (150 aa)) form the Globin domain. The Homodimerization signature appears at 41–45 (EIAPS). Positions 51, 65, 69, 99, and 104 each coordinate heme b. The Homodimerization motif lies at 111–123 (DEHFEVTKFALLE).

This sequence belongs to the plant globin family. As to quaternary structure, homodimer. The cofactor is heme b.

It carries out the reaction Fe(III)-heme b-[protein] + nitric oxide + H2O = Fe(II)-heme b-[protein] + nitrite + 2 H(+). Its function is as follows. Phytoglobin that reduces nitrite to nitric oxide (NO) under anoxic conditions (e.g. during flooding or in waterlogged soil) and upon root nodulation. Required for general plant development and during nodulation, especially for the onset of symbiosis. Monitors nitric oxide (NO) levels during early phase of the nitrogen-fixing symbiosis and buffers oxygen in functioning nodules. May not function as an oxygen storage or transport protein. Has an unusually high affinity for O(2) through a hexacoordinate heme iron because of a very low dissociation constant. The protein is Anaerobic nitrite reductase Glb1-1 of Medicago truncatula (Barrel medic).